The sequence spans 851 residues: UPF0508 protein CAGL0M08074g (851 aa).

It belongs to the UPF0508 family.

This chain is UPF0508 protein CAGL0M08074g, found in Candida glabrata (strain ATCC 2001 / BCRC 20586 / JCM 3761 / NBRC 0622 / NRRL Y-65 / CBS 138) (Yeast).